A 122-amino-acid polypeptide reads, in one-letter code: Large ribosomal subunit protein uL14c (122 aa).

Belongs to the universal ribosomal protein uL14 family. As to quaternary structure, part of the 50S ribosomal subunit.

The protein resides in the plastid. The protein localises to the chloroplast. In terms of biological role, binds to 23S rRNA. The protein is Large ribosomal subunit protein uL14c of Jasminum nudiflorum (Winter jasmine).